The following is a 98-amino-acid chain: Large ribosomal subunit protein bL25 (98 aa).

It belongs to the bacterial ribosomal protein bL25 family. In terms of assembly, part of the 50S ribosomal subunit; part of the 5S rRNA/L5/L18/L25 subcomplex. Contacts the 5S rRNA. Binds to the 5S rRNA independently of L5 and L18.

Its function is as follows. This is one of the proteins that binds to the 5S RNA in the ribosome where it forms part of the central protuberance. The polypeptide is Large ribosomal subunit protein bL25 (Synechocystis sp. (strain ATCC 27184 / PCC 6803 / Kazusa)).